We begin with the raw amino-acid sequence, 146 residues long: Hemoglobin subunit beta-2 (146 aa).

The Globin domain maps to 2–146 (KWTDKERAVI…VVSALGKQYC (145 aa)). Residues His-63 and His-92 each coordinate heme b.

It belongs to the globin family. As to quaternary structure, heterotetramer of two alpha chains and two beta chains. As to expression, red blood cells.

Involved in oxygen transport from gills to the various peripheral tissues. This chain is Hemoglobin subunit beta-2 (hbb2), found in Lycodes reticulatus (Arctic eelpout).